Here is a 65-residue protein sequence, read N- to C-terminus: Large ribosomal subunit protein bL35 (65 aa).

This sequence belongs to the bacterial ribosomal protein bL35 family.

This is Large ribosomal subunit protein bL35 from Aeromonas hydrophila subsp. hydrophila (strain ATCC 7966 / DSM 30187 / BCRC 13018 / CCUG 14551 / JCM 1027 / KCTC 2358 / NCIMB 9240 / NCTC 8049).